Consider the following 730-residue polypeptide: Elongation factor 2 (730 aa).

In terms of domain architecture, tr-type G spans 19–260 (VMIRNIAIIA…MVIRFLPSPI (242 aa)). GTP is bound by residues 28-35 (AHIDHGKT), 94-98 (DTPGH), and 148-151 (NKVD). A Diphthamide modification is found at histidine 596.

This sequence belongs to the TRAFAC class translation factor GTPase superfamily. Classic translation factor GTPase family. EF-G/EF-2 subfamily.

It is found in the cytoplasm. Functionally, catalyzes the GTP-dependent ribosomal translocation step during translation elongation. During this step, the ribosome changes from the pre-translocational (PRE) to the post-translocational (POST) state as the newly formed A-site-bound peptidyl-tRNA and P-site-bound deacylated tRNA move to the P and E sites, respectively. Catalyzes the coordinated movement of the two tRNA molecules, the mRNA and conformational changes in the ribosome. The chain is Elongation factor 2 (fusA) from Methanococcoides methylutens.